The primary structure comprises 383 residues: UDP-N-acetylglucosamine--N-acetylmuramyl-(pentapeptide) pyrophosphoryl-undecaprenol N-acetylglucosamine transferase (383 aa).

UDP-N-acetyl-alpha-D-glucosamine is bound by residues 11–13, Asn125, Arg166, Ser191, Ile246, and Gln291; that span reads TGG. The segment at 364–383 is disordered; sequence PNGRERTPIEAEKKAPRSNS. Residues 366–383 show a composition bias toward basic and acidic residues; the sequence is GRERTPIEAEKKAPRSNS.

Belongs to the glycosyltransferase 28 family. MurG subfamily.

It localises to the cell inner membrane. It catalyses the reaction di-trans,octa-cis-undecaprenyl diphospho-N-acetyl-alpha-D-muramoyl-L-alanyl-D-glutamyl-meso-2,6-diaminopimeloyl-D-alanyl-D-alanine + UDP-N-acetyl-alpha-D-glucosamine = di-trans,octa-cis-undecaprenyl diphospho-[N-acetyl-alpha-D-glucosaminyl-(1-&gt;4)]-N-acetyl-alpha-D-muramoyl-L-alanyl-D-glutamyl-meso-2,6-diaminopimeloyl-D-alanyl-D-alanine + UDP + H(+). It participates in cell wall biogenesis; peptidoglycan biosynthesis. In terms of biological role, cell wall formation. Catalyzes the transfer of a GlcNAc subunit on undecaprenyl-pyrophosphoryl-MurNAc-pentapeptide (lipid intermediate I) to form undecaprenyl-pyrophosphoryl-MurNAc-(pentapeptide)GlcNAc (lipid intermediate II). The polypeptide is UDP-N-acetylglucosamine--N-acetylmuramyl-(pentapeptide) pyrophosphoryl-undecaprenol N-acetylglucosamine transferase (Myxococcus xanthus (strain DK1622)).